The following is a 200-amino-acid chain: AP-5 complex subunit sigma-1 (200 aa).

In terms of assembly, probably part of the adaptor protein complex 5 (AP-5) a tetramer composed of AP5B1, AP5M1, AP5S1 and AP5Z1. Interacts with ZFYVE26 and SPG11.

It localises to the cytoplasm. Its subcellular location is the cytosol. It is found in the late endosome membrane. The protein resides in the lysosome membrane. As part of AP-5, a probable fifth adaptor protein complex it may be involved in endosomal transport. According to PubMed:20613862, it is required for efficient homologous recombination DNA double-strand break repair. The protein is AP-5 complex subunit sigma-1 (AP5S1) of Homo sapiens (Human).